We begin with the raw amino-acid sequence, 385 residues long: Heptahelical transmembrane protein 4 (385 aa).

A compositionally biased stretch (basic and acidic residues) spans 1-12 (MGDEAEIKEHLK). Residues 1–22 (MGDEAEIKEHLKPQASSETMDK) are disordered. Residues 1–79 (MGDEAEIKEH…LSIFTIHNET (79 aa)) are Cytoplasmic-facing. The helical transmembrane segment at 80–100 (LNVWTHLIGFFLFLALTIYTA) threads the bilayer. At 101-191 (TKVPSVVDLH…LIFRPITRWP (91 aa)) the chain is on the extracellular side. The helical transmembrane segment at 192–212 (FYAFLGGAMFCLLASSTCHLL) threads the bilayer. At 213-228 (SCHSERVSYIMLRLDY) the chain is on the cytoplasmic side. A helical membrane pass occupies residues 229–249 (AGIAALIATSFYPPVYYSFMC). At 250–256 (DPFFCNL) the chain is on the extracellular side. Residues 257 to 277 (YLGFITILGIATVLVSLLPVF) form a helical membrane-spanning segment. The Cytoplasmic portion of the chain corresponds to 278 to 288 (QSPEFRVVRAS). Residues 289–309 (LFFGMGFSGLAPILHKLIIFW) form a helical membrane-spanning segment. The Extracellular portion of the chain corresponds to 310-313 (DQPE). The chain crosses the membrane as a helical span at residues 314-334 (ALHTTGYEILMGLLYGLGALV). Topologically, residues 335-356 (YATRIPERWMPGKFDIAGHSHQ) are cytoplasmic. A helical transmembrane segment spans residues 357-377 (LFHVLVVAGAFTHYRAGLVYL).

This sequence belongs to the ADIPOR family. As to expression, expressed in roots, leaves, stems and flowers.

It is found in the membrane. Its function is as follows. May play a role in abiotic stress response. The polypeptide is Heptahelical transmembrane protein 4 (HHP4) (Arabidopsis thaliana (Mouse-ear cress)).